A 148-amino-acid chain; its full sequence is Glycine cleavage system H protein 5 (148 aa).

Residues valine 33 to lysine 115 enclose the Lipoyl-binding domain. Lysine 74 bears the N6-lipoyllysine mark.

It belongs to the GcvH family. The glycine cleavage system is composed of four proteins: P, T, L and H. (R)-lipoate is required as a cofactor.

In terms of biological role, the glycine cleavage system catalyzes the degradation of glycine. The H protein shuttles the methylamine group of glycine from the P protein to the T protein. The sequence is that of Glycine cleavage system H protein 5 from Aquifex aeolicus (strain VF5).